A 173-amino-acid polypeptide reads, in one-letter code: MPRTQRNDNFIDKSFTVMADLILKVLPTNKKSKEAFAYYRDGMSAQADGEYAEALENYQEALTLEEDPIDRSFILYNIALVHTSNGDHQTALDHYLQALDLNPKMPQALNNIAVIHHFLGQRSEEAGNDDEAERHYDQAAEYWTQAIRLAPNNYIEAQNWLKTTGRSKVDVYF.

3 TPR repeats span residues 35–68 (AFAYYRDGMSAQADGEYAEALENYQEALTLEEDP), 72–105 (SFILYNIALVHTSNGDHQTALDHYLQALDLNPKM), and 120–153 (GQRSEEAGNDDEAERHYDQAAEYWTQAIRLAPNN).

It belongs to the Ycf3 family.

The protein localises to the cellular thylakoid membrane. Essential for the assembly of the photosystem I (PSI) complex. May act as a chaperone-like factor to guide the assembly of the PSI subunits. The protein is Photosystem I assembly protein Ycf3 of Synechococcus elongatus (strain ATCC 33912 / PCC 7942 / FACHB-805) (Anacystis nidulans R2).